A 925-amino-acid polypeptide reads, in one-letter code: TBC1 domain family member 2A (925 aa).

At Met-1 the chain carries N-acetylmethionine. Positions 1–41 are disordered; the sequence is MEGAQESPAESGSSVPWSEEPAGSAKVPEVSLSEESEGCTR. Residues 1 to 171 form an interaction with CADH1 region; it reads MEGAQESPAE…AGNGPALRLE (171 aa). Residues 47-144 enclose the PH domain; the sequence is PPKLCGYLSK…WLQQLQMKRW (98 aa). The segment at 231 to 278 is disordered; sequence NKQTQGANHRPPGEDSPLIEETQREEQPSPPGPGAPGKDPANSLKSSL. The tract at residues 297–435 is interaction with RAC1; the sequence is SEGLMRNRTA…KVTQDFMKAP (139 aa). The stretch at 302-475 forms a coiled coil; that stretch reads RNRTAQEKVL…LNSEIHQVTK (174 aa). The region spanning 622-814 is the Rab-GAP TBC domain; that stretch reads GVPHEHRPRV…QVWDAFLYEG (193 aa). A coiled-coil region spans residues 872–907; the sequence is MKQLRQLRAAHRERLEAELNELEQLKAEYLETRAAQ. Positions 904–925 are disordered; that stretch reads RAAQGPAVPEGSPSEDEGEAEP. The segment covering 916–925 has biased composition (acidic residues); it reads PSEDEGEAEP. Ser-917 bears the Phosphoserine mark.

Interacts with activated RAC1 and CDH1.

The protein localises to the cytoplasm. It is found in the cytoplasmic vesicle. It localises to the cell junction. Functionally, may act as a GTPase-activating protein for Rab family protein(s). Signal effector acting as a linker between RAC1 and RAB7A, leading to RAB7A inactivation and further inhibition of cadherin degradation. This chain is TBC1 domain family member 2A (TBC1D2), found in Bos taurus (Bovine).